Reading from the N-terminus, the 121-residue chain is Prefoldin subunit beta (121 aa).

Belongs to the prefoldin subunit beta family. As to quaternary structure, heterohexamer of two alpha and four beta subunits.

It localises to the cytoplasm. In terms of biological role, molecular chaperone capable of stabilizing a range of proteins. Seems to fulfill an ATP-independent, HSP70-like function in archaeal de novo protein folding. The sequence is that of Prefoldin subunit beta from Methanoculleus marisnigri (strain ATCC 35101 / DSM 1498 / JR1).